A 490-amino-acid chain; its full sequence is Bifunctional protein GlmU (490 aa).

The pyrophosphorylase stretch occupies residues Met-1 to Arg-241. Residues Leu-12–Gly-15, Lys-26, Gln-83, Gly-88–Thr-89, Ser-112–Asp-114, Gly-151, Glu-166, Asn-181, and Asn-239 each bind UDP-N-acetyl-alpha-D-glucosamine. Asp-114 contacts Mg(2+). Mg(2+) is bound at residue Asn-239. A linker region spans residues Val-242 to Ala-262. The tract at residues Gly-263–Glu-490 is N-acetyltransferase. Positions 344 and 362 each coordinate UDP-N-acetyl-alpha-D-glucosamine. The Proton acceptor role is filled by His-374. 2 residues coordinate UDP-N-acetyl-alpha-D-glucosamine: Tyr-377 and Asn-388. Acetyl-CoA is bound by residues Ala-391, Asn-397 to Tyr-398, Ser-416, and Ala-434. The segment at Arg-462–Glu-490 is disordered. A compositionally biased stretch (low complexity) spans Gly-467 to Glu-490.

It in the N-terminal section; belongs to the N-acetylglucosamine-1-phosphate uridyltransferase family. This sequence in the C-terminal section; belongs to the transferase hexapeptide repeat family. Homotrimer. Mg(2+) is required as a cofactor.

It is found in the cytoplasm. The enzyme catalyses alpha-D-glucosamine 1-phosphate + acetyl-CoA = N-acetyl-alpha-D-glucosamine 1-phosphate + CoA + H(+). It carries out the reaction N-acetyl-alpha-D-glucosamine 1-phosphate + UTP + H(+) = UDP-N-acetyl-alpha-D-glucosamine + diphosphate. It functions in the pathway nucleotide-sugar biosynthesis; UDP-N-acetyl-alpha-D-glucosamine biosynthesis; N-acetyl-alpha-D-glucosamine 1-phosphate from alpha-D-glucosamine 6-phosphate (route II): step 2/2. Its pathway is nucleotide-sugar biosynthesis; UDP-N-acetyl-alpha-D-glucosamine biosynthesis; UDP-N-acetyl-alpha-D-glucosamine from N-acetyl-alpha-D-glucosamine 1-phosphate: step 1/1. It participates in bacterial outer membrane biogenesis; LPS lipid A biosynthesis. Functionally, catalyzes the last two sequential reactions in the de novo biosynthetic pathway for UDP-N-acetylglucosamine (UDP-GlcNAc). The C-terminal domain catalyzes the transfer of acetyl group from acetyl coenzyme A to glucosamine-1-phosphate (GlcN-1-P) to produce N-acetylglucosamine-1-phosphate (GlcNAc-1-P), which is converted into UDP-GlcNAc by the transfer of uridine 5-monophosphate (from uridine 5-triphosphate), a reaction catalyzed by the N-terminal domain. The protein is Bifunctional protein GlmU of Mycolicibacterium paratuberculosis (strain ATCC BAA-968 / K-10) (Mycobacterium paratuberculosis).